A 423-amino-acid chain; its full sequence is Gamma-glutamyl phosphate reductase (423 aa).

It belongs to the gamma-glutamyl phosphate reductase family.

Its subcellular location is the cytoplasm. The catalysed reaction is L-glutamate 5-semialdehyde + phosphate + NADP(+) = L-glutamyl 5-phosphate + NADPH + H(+). The protein operates within amino-acid biosynthesis; L-proline biosynthesis; L-glutamate 5-semialdehyde from L-glutamate: step 2/2. In terms of biological role, catalyzes the NADPH-dependent reduction of L-glutamate 5-phosphate into L-glutamate 5-semialdehyde and phosphate. The product spontaneously undergoes cyclization to form 1-pyrroline-5-carboxylate. The protein is Gamma-glutamyl phosphate reductase of Pseudomonas putida (strain GB-1).